Here is a 747-residue protein sequence, read N- to C-terminus: Elongation factor G, mitochondrial (747 aa).

The transit peptide at 1–32 (MTLITRVLNSNLPLRLSALKTVRQLQCGYSSH) directs the protein to the mitochondrion. The tr-type G domain maps to 42 to 319 (ERIRNIGISA…AIIDYLPNPG (278 aa)). Residues 51-58 (AHIDSGKT), 118-122 (DTPGH), and 172-175 (NKLD) each bind GTP.

The protein belongs to the TRAFAC class translation factor GTPase superfamily. Classic translation factor GTPase family. EF-G/EF-2 subfamily.

The protein resides in the mitochondrion. It participates in protein biosynthesis; polypeptide chain elongation. Mitochondrial GTPase that catalyzes the GTP-dependent ribosomal translocation step during translation elongation. During this step, the ribosome changes from the pre-translocational (PRE) to the post-translocational (POST) state as the newly formed A-site-bound peptidyl-tRNA and P-site-bound deacylated tRNA move to the P and E sites, respectively. Catalyzes the coordinated movement of the two tRNA molecules, the mRNA and conformational changes in the ribosome. Essential during development as it acts as a retrograde signal from mitochondria to the nucleus to slow down cell proliferation if mitochondrial energy output is low. This chain is Elongation factor G, mitochondrial, found in Drosophila virilis (Fruit fly).